The chain runs to 206 residues: Small ribosomal subunit protein uS4 (206 aa).

In terms of domain architecture, S4 RNA-binding spans 96-157; sequence CRLDNVVYRM…KCRNQLRIAQ (62 aa).

The protein belongs to the universal ribosomal protein uS4 family. In terms of assembly, part of the 30S ribosomal subunit. Contacts protein S5. The interaction surface between S4 and S5 is involved in control of translational fidelity.

One of the primary rRNA binding proteins, it binds directly to 16S rRNA where it nucleates assembly of the body of the 30S subunit. Its function is as follows. With S5 and S12 plays an important role in translational accuracy. The protein is Small ribosomal subunit protein uS4 of Stutzerimonas stutzeri (strain A1501) (Pseudomonas stutzeri).